The sequence spans 207 residues: Small ribosomal subunit protein uS4c (207 aa).

Positions 92-156 (MRLDNILFRL…YQSIITKRIE (65 aa)) constitute an S4 RNA-binding domain.

The protein belongs to the universal ribosomal protein uS4 family. Part of the 30S ribosomal subunit. Contacts protein S5. The interaction surface between S4 and S5 is involved in control of translational fidelity.

The protein localises to the plastid. It is found in the chloroplast. In terms of biological role, one of the primary rRNA binding proteins, it binds directly to 16S rRNA where it nucleates assembly of the body of the 30S subunit. Its function is as follows. With S5 and S12 plays an important role in translational accuracy. This is Small ribosomal subunit protein uS4c (rps4) from Equisetum sylvaticum (Wood horsetail).